A 127-amino-acid polypeptide reads, in one-letter code: Large ribosomal subunit protein eL32 (127 aa).

Over residues 37–48 the composition is skewed to basic and acidic residues; sequence KWRKPKGTDSKM. The tract at residues 37 to 65 is disordered; sequence KWRKPKGTDSKMRVKLKGKARSPSIGWSS.

The protein belongs to the eukaryotic ribosomal protein eL32 family.

The protein is Large ribosomal subunit protein eL32 of Thermococcus sibiricus (strain DSM 12597 / MM 739).